The following is a 315-amino-acid chain: Polyprenyl transferase mpaA (315 aa).

The next 8 membrane-spanning stretches (helical) occupy residues 40–60 (IEFI…LCGA), 84–103 (LASG…GQYF), 118–135 (IWSL…YPYL), 143–163 (VFVY…ITGW), 174–194 (GDII…CVYF), 224–244 (LFLA…ISTI), 248–268 (WLWV…IAQF), and 279–299 (IHWD…VEVG).

Belongs to the UbiA prenyltransferase family. Mg(2+) is required as a cofactor.

The protein resides in the golgi apparatus membrane. The enzyme catalyses 5,7-dihydroxy-4-methylphthalide + (2E,6E)-farnesyl diphosphate = 4-farnesyl-3,5-dihydroxy-6-methylphthalide + diphosphate. It functions in the pathway secondary metabolite biosynthesis; terpenoid biosynthesis. In terms of biological role, polyprenyl transferase; part of the gene cluster that mediates the biosynthesis of mycophenolic acid (MPA), the first isolated antibiotic natural product in the world obtained from a culture of Penicillium brevicompactum in 1893. MpaA is a Golgi apparatus-associated enzyme that catalyzes the prenylation of 5,7-dihydroxy-4,6-dimethylphthalide (DHMP) to yield farnesyl-DHMP (FDHMP). The first step of the pathway is the synthesis of 5-methylorsellinic acid (5MOA) by the cytosolic polyketide synthase mpaC. 5MOA is then converted to the phthalide compound 5,7-dihydroxy-4,6-dimethylphthalide (DHMP) by the endoplasmic reticulum-bound cytochrome P450 monooxygenase mpaDE. MpaDE first catalyzes hydroxylation of 5-MOA to 4,6-dihydroxy-2-(hydroxymethyl)-3-methylbenzoic acid (DHMB). MpaDE then acts as a lactone synthase that catalyzes the ring closure to convert DHMB into DHMP. The next step is the prenylation of DHMP by the Golgi apparatus-associated prenyltransferase mpaA to yield farnesyl-DHMP (FDHMP). The ER-bound oxygenase mpaB then mediates the oxidative cleavage the C19-C20 double bond in FDHMP to yield FDHMP-3C via a mycophenolic aldehyde intermediate. The O-methyltransferase mpaG catalyzes the methylation of FDHMP-3C to yield MFDHMP-3C. After the cytosolic methylation of FDHMP-3C, MFDHMP-3C enters into peroxisomes probably via free diffusion due to its low molecular weight. Upon a peroxisomal CoA ligation reaction, catalyzed by a beta-oxidation component enzyme acyl-CoA ligase ACL891, MFDHMP-3C-CoA would then be restricted to peroxisomes for the following beta-oxidation pathway steps. The peroxisomal beta-oxidation machinery than converts MFDHMP-3C-CoA into MPA_CoA, via a beta-oxidation chain-shortening process. Finally mpaH acts as a peroxisomal acyl-CoA hydrolase with high substrate specificity toward MPA-CoA to release the final product MPA. The sequence is that of Polyprenyl transferase mpaA from Penicillium brevicompactum.